Here is a 412-residue protein sequence, read N- to C-terminus: Glucose-1-phosphate adenylyltransferase (412 aa).

Alpha-D-glucose 1-phosphate is bound by residues glycine 169, 184 to 185 (EK), and serine 201.

Belongs to the bacterial/plant glucose-1-phosphate adenylyltransferase family. Homotetramer.

It catalyses the reaction alpha-D-glucose 1-phosphate + ATP + H(+) = ADP-alpha-D-glucose + diphosphate. It participates in glycan biosynthesis; glycogen biosynthesis. Functionally, involved in the biosynthesis of ADP-glucose, a building block required for the elongation reactions to produce glycogen. Catalyzes the reaction between ATP and alpha-D-glucose 1-phosphate (G1P) to produce pyrophosphate and ADP-Glc. In Geobacter metallireducens (strain ATCC 53774 / DSM 7210 / GS-15), this protein is Glucose-1-phosphate adenylyltransferase.